The primary structure comprises 71 residues: UPF0499 protein ACLA_083080 (71 aa).

Residues 1-18 form the signal peptide; sequence MKFLNILTLAFITGMASA. 3 disulfide bridges follow: cysteine 44-cysteine 58, cysteine 48-cysteine 61, and cysteine 54-cysteine 68.

It belongs to the UPF0499 family.

It localises to the secreted. The polypeptide is UPF0499 protein ACLA_083080 (Aspergillus clavatus (strain ATCC 1007 / CBS 513.65 / DSM 816 / NCTC 3887 / NRRL 1 / QM 1276 / 107)).